The primary structure comprises 140 residues: Hemoglobin subunit beta (140 aa).

Positions 1–140 (GSDLVSGFWG…VGDALAKAYH (140 aa)) constitute a Globin domain. Heme b is bound by residues His-57 and His-86.

The protein belongs to the globin family. In terms of assembly, heterotetramer of two alpha chains and two beta chains. In terms of tissue distribution, red blood cells.

Functionally, involved in oxygen transport from the lung to the various peripheral tissues. The chain is Hemoglobin subunit beta (HBB) from Pelophylax lessonae (Pool frog).